Here is a 156-residue protein sequence, read N- to C-terminus: Small ribosomal subunit protein uS10m (156 aa).

The protein belongs to the universal ribosomal protein uS10 family.

The protein localises to the mitochondrion. Functionally, ribosomal protein required for normal mitochondrial function and normal larval development. Thought to have a role in insulin/IGF signaling. This is Small ribosomal subunit protein uS10m (mrps-10) from Caenorhabditis elegans.